A 68-amino-acid polypeptide reads, in one-letter code: Large ribosomal subunit protein bL32 (68 aa).

Positions 1–20 are disordered; the sequence is MAVPQNRVTRSRRNMRRSHD.

The protein belongs to the bacterial ribosomal protein bL32 family.

In Cereibacter sphaeroides (strain ATCC 17029 / ATH 2.4.9) (Rhodobacter sphaeroides), this protein is Large ribosomal subunit protein bL32.